The following is a 554-amino-acid chain: Phosphomannomutase (554 aa).

Ser149 acts as the Phosphoserine intermediate in catalysis. Mg(2+)-binding residues include Ser149, Asp301, Asp303, and Asp305.

The protein belongs to the phosphohexose mutase family. It depends on Mg(2+) as a cofactor.

It carries out the reaction alpha-D-mannose 1-phosphate = D-mannose 6-phosphate. This Mycoplasma pneumoniae (strain ATCC 29342 / M129 / Subtype 1) (Mycoplasmoides pneumoniae) protein is Phosphomannomutase (manB).